The sequence spans 237 residues: Phosphoribosylaminoimidazole-succinocarboxamide synthase (237 aa).

The protein belongs to the SAICAR synthetase family.

It carries out the reaction 5-amino-1-(5-phospho-D-ribosyl)imidazole-4-carboxylate + L-aspartate + ATP = (2S)-2-[5-amino-1-(5-phospho-beta-D-ribosyl)imidazole-4-carboxamido]succinate + ADP + phosphate + 2 H(+). It functions in the pathway purine metabolism; IMP biosynthesis via de novo pathway; 5-amino-1-(5-phospho-D-ribosyl)imidazole-4-carboxamide from 5-amino-1-(5-phospho-D-ribosyl)imidazole-4-carboxylate: step 1/2. This Listeria monocytogenes serotype 4b (strain CLIP80459) protein is Phosphoribosylaminoimidazole-succinocarboxamide synthase.